A 284-amino-acid polypeptide reads, in one-letter code: 2-dehydro-3-deoxyphosphooctonate aldolase (284 aa).

It belongs to the KdsA family.

Its subcellular location is the cytoplasm. The enzyme catalyses D-arabinose 5-phosphate + phosphoenolpyruvate + H2O = 3-deoxy-alpha-D-manno-2-octulosonate-8-phosphate + phosphate. It functions in the pathway carbohydrate biosynthesis; 3-deoxy-D-manno-octulosonate biosynthesis; 3-deoxy-D-manno-octulosonate from D-ribulose 5-phosphate: step 2/3. The protein operates within bacterial outer membrane biogenesis; lipopolysaccharide biosynthesis. This Paraburkholderia xenovorans (strain LB400) protein is 2-dehydro-3-deoxyphosphooctonate aldolase.